Consider the following 197-residue polypeptide: Crossover junction endodeoxyribonuclease RuvC (197 aa).

Active-site residues include Asp-7, Glu-68, and Asp-141. Asp-7, Glu-68, and Asp-141 together coordinate Mg(2+). Low complexity-rich tracts occupy residues Ala-165–Arg-181 and Ala-188–Ser-197. A disordered region spans residues Ala-165 to Ser-197.

It belongs to the RuvC family. Homodimer which binds Holliday junction (HJ) DNA. The HJ becomes 2-fold symmetrical on binding to RuvC with unstacked arms; it has a different conformation from HJ DNA in complex with RuvA. In the full resolvosome a probable DNA-RuvA(4)-RuvB(12)-RuvC(2) complex forms which resolves the HJ. Requires Mg(2+) as cofactor.

The protein localises to the cytoplasm. It carries out the reaction Endonucleolytic cleavage at a junction such as a reciprocal single-stranded crossover between two homologous DNA duplexes (Holliday junction).. The RuvA-RuvB-RuvC complex processes Holliday junction (HJ) DNA during genetic recombination and DNA repair. Endonuclease that resolves HJ intermediates. Cleaves cruciform DNA by making single-stranded nicks across the HJ at symmetrical positions within the homologous arms, yielding a 5'-phosphate and a 3'-hydroxyl group; requires a central core of homology in the junction. The consensus cleavage sequence is 5'-(A/T)TT(C/G)-3'. Cleavage occurs on the 3'-side of the TT dinucleotide at the point of strand exchange. HJ branch migration catalyzed by RuvA-RuvB allows RuvC to scan DNA until it finds its consensus sequence, where it cleaves and resolves the cruciform DNA. The polypeptide is Crossover junction endodeoxyribonuclease RuvC (Frankia alni (strain DSM 45986 / CECT 9034 / ACN14a)).